The sequence spans 208 residues: MQFVDELISDFDKALRVINGVVFESRPNPGRGLPDGVMSEAEKRHAAGLMRVNNVGEVCAQALYDAQGRFAQKAEIKNAFARAGIEEEDHLAWTAERLRELGSHTSLLNPLWYGGAYVLGSIAARLGDARNLGFVSETERQVEHHLMGHLDKLPAQDNRSRAIVDQMRIDEIEHGQAARDLGAAEMPAPVKGLMKAMAKVMTTVAYRI.

6 residues coordinate Fe cation: Glu-57, Glu-87, His-90, Glu-139, Glu-171, and His-174.

This sequence belongs to the COQ7 family. Fe cation is required as a cofactor.

The protein resides in the cell membrane. The enzyme catalyses a 5-methoxy-2-methyl-3-(all-trans-polyprenyl)benzene-1,4-diol + AH2 + O2 = a 3-demethylubiquinol + A + H2O. It participates in cofactor biosynthesis; ubiquinone biosynthesis. Its function is as follows. Catalyzes the hydroxylation of 2-nonaprenyl-3-methyl-6-methoxy-1,4-benzoquinol during ubiquinone biosynthesis. This is 3-demethoxyubiquinol 3-hydroxylase from Herbaspirillum seropedicae.